We begin with the raw amino-acid sequence, 83 residues long: Short neurotoxin 3FTx-Oxy4 (83 aa).

The first 21 residues, 1–21 (MKTLLLTLVVVTIVCLDLGYT), serve as a signal peptide directing secretion. 4 disulfide bridges follow: Cys-24–Cys-45, Cys-38–Cys-62, Cys-64–Cys-75, and Cys-76–Cys-81.

Belongs to the three-finger toxin family. Short-chain subfamily. Type I alpha-neurotoxin sub-subfamily. Expressed by the venom gland.

The protein resides in the secreted. Its function is as follows. Binds to muscle nicotinic acetylcholine receptor (nAChR) and inhibit acetylcholine from binding to the receptor, thereby impairing neuromuscular transmission. The polypeptide is Short neurotoxin 3FTx-Oxy4 (Oxyuranus microlepidotus (Inland taipan)).